A 185-amino-acid polypeptide reads, in one-letter code: Putative manganese efflux pump MntP (185 aa).

The next 6 helical transmembrane spans lie at 4-24 (LFIGELVSLSIMAFALGTDAF), 40-60 (IFHIGVVIGLFHVMMPLAGMA), 64-84 (LLSGFLGMLAVYIGGSLLFIL), 108-128 (LLLFAIGVSLDSFSVGLSLGM), 134-154 (FLAVTLFGVFSTVLTWAGLLA), and 165-185 (YSEALGGAILIGFGLKLLLPV).

It belongs to the MntP (TC 9.B.29) family.

It is found in the cell membrane. Functionally, probably functions as a manganese efflux pump. The sequence is that of Putative manganese efflux pump MntP from Bacillus velezensis (strain DSM 23117 / BGSC 10A6 / LMG 26770 / FZB42) (Bacillus amyloliquefaciens subsp. plantarum).